We begin with the raw amino-acid sequence, 301 residues long: Probable alpha-L-glutamate ligase (301 aa).

An ATP-grasp domain is found at 104–287 (LQLLSRRGIG…VAGIIIEHLE (184 aa)). ATP is bound by residues Lys141, 178 to 179 (EY), Asp187, and 211 to 213 (RSN). Asp248, Glu260, and Asn262 together coordinate Mg(2+). Residues Asp248, Glu260, and Asn262 each coordinate Mn(2+).

The protein belongs to the RimK family. It depends on Mg(2+) as a cofactor. Requires Mn(2+) as cofactor.

The sequence is that of Probable alpha-L-glutamate ligase from Pseudomonas fluorescens (strain SBW25).